The following is a 396-amino-acid chain: Tyrosine--tRNA ligase (396 aa).

A 'HIGH' region motif is present at residues 43-52 (PTAPDIHLGH). The 'KMSKS' region signature appears at 227-231 (KMSKS). Residue Lys230 participates in ATP binding. In terms of domain architecture, S4 RNA-binding spans 335–395 (IGLATLLKEA…GKRKFARVTV (61 aa)).

The protein belongs to the class-I aminoacyl-tRNA synthetase family. TyrS type 2 subfamily. As to quaternary structure, homodimer.

The protein localises to the cytoplasm. The enzyme catalyses tRNA(Tyr) + L-tyrosine + ATP = L-tyrosyl-tRNA(Tyr) + AMP + diphosphate + H(+). In terms of biological role, catalyzes the attachment of tyrosine to tRNA(Tyr) in a two-step reaction: tyrosine is first activated by ATP to form Tyr-AMP and then transferred to the acceptor end of tRNA(Tyr). This is Tyrosine--tRNA ligase from Haemophilus ducreyi (strain 35000HP / ATCC 700724).